Reading from the N-terminus, the 371-residue chain is Spermidine/putrescine import ATP-binding protein PotA (371 aa).

The region spanning 10-240 (VELRNVTKSY…PKNLFVARFI (231 aa)) is the ABC transporter domain. Residue 42–49 (GPSGCGKT) coordinates ATP.

This sequence belongs to the ABC transporter superfamily. Spermidine/putrescine importer (TC 3.A.1.11.1) family. In terms of assembly, the complex is composed of two ATP-binding proteins (PotA), two transmembrane proteins (PotB and PotC) and a solute-binding protein (PotD).

It is found in the cell inner membrane. It catalyses the reaction ATP + H2O + polyamine-[polyamine-binding protein]Side 1 = ADP + phosphate + polyamineSide 2 + [polyamine-binding protein]Side 1.. Part of the ABC transporter complex PotABCD involved in spermidine/putrescine import. Responsible for energy coupling to the transport system. The polypeptide is Spermidine/putrescine import ATP-binding protein PotA (Haemophilus ducreyi (strain 35000HP / ATCC 700724)).